The sequence spans 242 residues: MSGQADTATTAEARTPAHAAHHLVEGVARVLTKPRFRGWIHVYSAGTAVLAGASLVAVSWAVGSAKAGLTTLAYTAATITMFTVSATYHRVNWKSATARNWMKRADHSMIFVFIAGSYTPFALLALPAHDGRVVLSIVWGGAIAGILLKMCWPAAPRSVGVPLYLLLGWVAVWYTATILHNAGVTALVLLFVGGALYSIGGILYAVRWPDPWPTTFGYHEFFHACTAVAAICHYIAMWFVVF.

The next 7 membrane-spanning stretches (helical) occupy residues Val42–Val62, Ala67–Thr87, Ser108–Ala128, Val133–Pro153, Val159–Leu179, Ala186–Val206, and Phe222–Phe242.

Belongs to the UPF0073 (Hly-III) family.

The protein localises to the cell membrane. The chain is UPF0073 membrane protein Rv1085c from Mycobacterium tuberculosis (strain ATCC 25618 / H37Rv).